The sequence spans 599 residues: MGSSKFKRAIGAVKDQTSVGLAKVNGRSASLSELDVAIVKATRHEEFPAEEKYIREILSLTSYSRSYINACVSTLSRRLNKTKCWTVALKTLILIQRLLGEGDQAYEQEIFFATRRGTRLLNMSDFRDVSRSNSWDYSAFVRTYALYLDERLDFRMQARHGKRGVYCVGGEADEEEQDQAAADLSTAIVVRSQPIAEMKTEQIFIRIQHLQQLLDRFLACRPTGNARNNRVVIVALYPIVKESFQIYYDVTEIMGILIERFMELDIPDSIKVYDIFCRVSKQFEELDQFYSWCKNMGIARSSEYPEIEKITQKKLDLMDEFIRDKSALEHTKQSKSVKSEADEDDDEARTEEVNEEQEDMNAIKALPEPPPKEEDDVKPEEEAKEEVIIEKKQEEMGDLLDLGNTNGGEAGQAGDSLALALFDGPYASGSGSESGPGWEAFKDDSADWETALVQTATNLSGQKSELGGGFDMLLLNGMYQHGAVNAAVKTSTAYGASGSASSMAFGSAGRPAATMLALPAPSTANGNAGNINSPVPMDPFAASLEVAPPAYVQMNDMEKKQRMLMEEQMMWDQYSRDGRQGHMNLRQNQNQPYSYTPQY.

One can recognise an ENTH domain in the interval 26–162; sequence GRSASLSELD…DFRMQARHGK (137 aa). 2 disordered regions span residues 332-382 and 580-599; these read KQSK…PEEE and QGHM…TPQY. Acidic residues-rich tracts occupy residues 341-359 and 373-382; these read ADED…EQED and EEDDVKPEEE. Residues 585–599 are compositionally biased toward polar residues; that stretch reads LRQNQNQPYSYTPQY.

It localises to the membrane. The protein resides in the clathrin-coated pit. Its subcellular location is the golgi apparatus. The protein localises to the cytoplasmic vesicle. It is found in the clathrin-coated vesicle. The protein is Putative clathrin assembly protein At1g03050 of Arabidopsis thaliana (Mouse-ear cress).